A 322-amino-acid polypeptide reads, in one-letter code: Glycerol-3-phosphate dehydrogenase [NAD(P)+] (322 aa).

NADPH-binding residues include Trp11, Arg31, Arg32, and Lys101. Sn-glycerol 3-phosphate-binding residues include Lys101 and Gly130. Ala134 is an NADPH binding site. Residues Lys184, Asp237, Ser247, Arg248, and Asn249 each coordinate sn-glycerol 3-phosphate. Residue Lys184 is the Proton acceptor of the active site. Arg248 contributes to the NADPH binding site. NADPH contacts are provided by Val270 and Glu272.

It belongs to the NAD-dependent glycerol-3-phosphate dehydrogenase family.

The protein resides in the cytoplasm. It carries out the reaction sn-glycerol 3-phosphate + NAD(+) = dihydroxyacetone phosphate + NADH + H(+). It catalyses the reaction sn-glycerol 3-phosphate + NADP(+) = dihydroxyacetone phosphate + NADPH + H(+). The protein operates within membrane lipid metabolism; glycerophospholipid metabolism. Its function is as follows. Catalyzes the reduction of the glycolytic intermediate dihydroxyacetone phosphate (DHAP) to sn-glycerol 3-phosphate (G3P), the key precursor for phospholipid synthesis. This Thermus thermophilus (strain ATCC BAA-163 / DSM 7039 / HB27) protein is Glycerol-3-phosphate dehydrogenase [NAD(P)+].